The primary structure comprises 374 residues: Glutamate 5-kinase (374 aa).

ATP is bound at residue Lys-8. The substrate site is built by Ser-49, Asp-136, and Asn-148. ATP-binding positions include 168-169 (TD) and 211-217 (TGGMQTK). The PUA domain occupies 276–354 (QGILTLDDGA…TQIRQILGYG (79 aa)).

It belongs to the glutamate 5-kinase family.

The protein resides in the cytoplasm. It carries out the reaction L-glutamate + ATP = L-glutamyl 5-phosphate + ADP. It functions in the pathway amino-acid biosynthesis; L-proline biosynthesis; L-glutamate 5-semialdehyde from L-glutamate: step 1/2. Its function is as follows. Catalyzes the transfer of a phosphate group to glutamate to form L-glutamate 5-phosphate. The chain is Glutamate 5-kinase from Picosynechococcus sp. (strain ATCC 27264 / PCC 7002 / PR-6) (Agmenellum quadruplicatum).